The sequence spans 217 residues: Non-structural protein NS3 (217 aa).

Belongs to the orbivirus NS3 family.

May play a role in the release of virions from infected cells. The chain is Non-structural protein NS3 (Segment-10) from Camelus dromedarius (Dromedary).